A 638-amino-acid polypeptide reads, in one-letter code: Eukaryotic translation initiation factor 2A (638 aa).

2 WD repeats span residues 287 to 329 (SKEG…FDFG) and 331 to 370 (GPRN…KLAN). Over residues 441-450 (KITKAKHEGI) the composition is skewed to basic and acidic residues. The interval 441–593 (KITKAKHEGI…SDKERKIRSV (153 aa)) is disordered. The residue at position 463 (threonine 463) is a Phosphothreonine. Over residues 492–501 (AAAGGVNGNK) the composition is skewed to low complexity. Over residues 583–593 (ISDKERKIRSV) the composition is skewed to basic and acidic residues.

This sequence belongs to the WD repeat EIF2A family.

Functions in the early steps of protein synthesis of a small number of specific mRNAs. Acts by directing the binding of methionyl-tRNAi to 40S ribosomal subunits. In contrast to the eIF-2 complex, it binds methionyl-tRNAi to 40S subunits in a codon-dependent manner, whereas the eIF-2 complex binds methionyl-tRNAi to 40S subunits in a GTP-dependent manner. This is Eukaryotic translation initiation factor 2A from Drosophila melanogaster (Fruit fly).